The following is a 271-amino-acid chain: Elongation factor Ts (271 aa).

The segment at 76–79 (TDFV) is involved in Mg(2+) ion dislocation from EF-Tu.

This sequence belongs to the EF-Ts family.

Its subcellular location is the cytoplasm. Associates with the EF-Tu.GDP complex and induces the exchange of GDP to GTP. It remains bound to the aminoacyl-tRNA.EF-Tu.GTP complex up to the GTP hydrolysis stage on the ribosome. This chain is Elongation factor Ts, found in Mycobacterium ulcerans (strain Agy99).